We begin with the raw amino-acid sequence, 860 residues long: Nucleolar MIF4G domain-containing protein 1 (860 aa).

Disordered regions lie at residues 1–172 (MAAS…AARK), 191–211 (RCLG…PLSF), and 226–339 (GKNS…EKYI). Residues 1–269 (MAASRSAGEA…EEEEEGDVEK (269 aa)) are necessary for nucleolar localization and for targeting PPP1CA to the nucleolus. Over residues 20–31 (VRMKRRGGRGPR) the composition is skewed to basic residues. A Phosphoserine modification is found at Ser57. Basic residues predominate over residues 77-99 (GGRKSRKELRKEKRHLRKARRLQ). Basic and acidic residues predominate over residues 115 to 131 (GAEEASGHRQDTEERAR). Position 139 is a phosphoserine (Ser139). The segment covering 142–151 (RKPRPSRVKA) has biased composition (basic residues). The segment covering 152–169 (KATAATAKTRPSAAATAA) has biased composition (low complexity). 2 stretches are compositionally biased toward acidic residues: residues 249–267 (SDLE…EGDV) and 278–293 (AQSE…EQGE). The Required for efficient binding to PPP1CA and for targeting PPP1CA to the nucleolus signature appears at 307–310 (RVRF). Residues 312 to 325 (EDEEKSENSSEDGD) show a composition bias toward acidic residues. 3 positions are modified to phosphoserine: Ser317, Ser320, and Ser321. Positions 362-559 (KKHVKGLLNR…ETMLALKNND (198 aa)) constitute an MIF4G domain. Positions 654–770 (DIRRNIFCTI…SLSILKVVEF (117 aa)) constitute an MI domain.

This sequence belongs to the CWC22 family. May interact with EIF4A1, EIF4A2 and EIF4A3. Interacts with PPP1CA and PPP1CC. In terms of tissue distribution, expressed in heart and skeletal muscle.

Its subcellular location is the nucleus. It localises to the nucleolus. In terms of biological role, plays a role in targeting PPP1CA to the nucleolus. In Homo sapiens (Human), this protein is Nucleolar MIF4G domain-containing protein 1 (NOM1).